Consider the following 137-residue polypeptide: MERTLSIIKPDAVAKGVVGKILDRFESNGLKIAATRKMQLSRADAEAFYAVHSERPFFGDLVDFMISGPVVVSVLEGEGALIKNRNLMGATNPKEAEAGTIRADFAENIDANAVHGSDSLENAAVEIAFFFSEREIS.

6 residues coordinate ATP: K9, F57, R85, T91, R102, and N112. The Pros-phosphohistidine intermediate role is filled by H115.

This sequence belongs to the NDK family. In terms of assembly, homotetramer. Mg(2+) is required as a cofactor.

It is found in the cytoplasm. The catalysed reaction is a 2'-deoxyribonucleoside 5'-diphosphate + ATP = a 2'-deoxyribonucleoside 5'-triphosphate + ADP. It carries out the reaction a ribonucleoside 5'-diphosphate + ATP = a ribonucleoside 5'-triphosphate + ADP. Its function is as follows. Major role in the synthesis of nucleoside triphosphates other than ATP. The ATP gamma phosphate is transferred to the NDP beta phosphate via a ping-pong mechanism, using a phosphorylated active-site intermediate. This Sulfurimonas denitrificans (strain ATCC 33889 / DSM 1251) (Thiomicrospira denitrificans (strain ATCC 33889 / DSM 1251)) protein is Nucleoside diphosphate kinase.